The sequence spans 557 residues: uncharacterized protein (557 aa).

The region spanning 7-206 (SSFIDMLRLG…FACFLEGMLS (200 aa)) is the DhaL domain.

This is an uncharacterized protein from Mycoplasma genitalium (strain ATCC 33530 / DSM 19775 / NCTC 10195 / G37) (Mycoplasmoides genitalium).